The following is a 192-amino-acid chain: Phosphoheptose isomerase (192 aa).

In terms of domain architecture, SIS spans 34 to 192; it reads LADALGNGKK…LEKRLFGERR (159 aa). Residue 49–51 participates in substrate binding; the sequence is NGG. Positions 58 and 62 each coordinate Zn(2+). Substrate is bound by residues glutamate 62, 91–92, 117–119, serine 122, and glutamine 169; these read ND and STS. Positions 169 and 177 each coordinate Zn(2+).

It belongs to the SIS family. GmhA subfamily. In terms of assembly, homotetramer. The cofactor is Zn(2+).

Its subcellular location is the cytoplasm. The catalysed reaction is 2 D-sedoheptulose 7-phosphate = D-glycero-alpha-D-manno-heptose 7-phosphate + D-glycero-beta-D-manno-heptose 7-phosphate. It functions in the pathway carbohydrate biosynthesis; D-glycero-D-manno-heptose 7-phosphate biosynthesis; D-glycero-alpha-D-manno-heptose 7-phosphate and D-glycero-beta-D-manno-heptose 7-phosphate from sedoheptulose 7-phosphate: step 1/1. In terms of biological role, catalyzes the isomerization of sedoheptulose 7-phosphate in D-glycero-D-manno-heptose 7-phosphate. In Geotalea daltonii (strain DSM 22248 / JCM 15807 / FRC-32) (Geobacter daltonii), this protein is Phosphoheptose isomerase.